The sequence spans 416 residues: Phosphoglycerate kinase (416 aa).

Residues Asp28 to Asn30, Arg44, His65 to Arg68, Arg122, and Arg162 each bind substrate. Residues Glu337 and Gly362 to Ile365 each bind ATP.

Belongs to the phosphoglycerate kinase family. In terms of assembly, monomer.

Its subcellular location is the cytoplasm. It carries out the reaction (2R)-3-phosphoglycerate + ATP = (2R)-3-phospho-glyceroyl phosphate + ADP. The protein operates within carbohydrate degradation; glycolysis; pyruvate from D-glyceraldehyde 3-phosphate: step 2/5. In Methanosarcina mazei (strain ATCC BAA-159 / DSM 3647 / Goe1 / Go1 / JCM 11833 / OCM 88) (Methanosarcina frisia), this protein is Phosphoglycerate kinase.